A 355-amino-acid polypeptide reads, in one-letter code: MAFNTPTLSTLIKQGEQQFQYRFPTLKRHNVIGVINRICAALSAGEHMHLDWLARQIIPTTAEEDYLIEYCLYKGIVRKQASTATGLVTVTAANDTTIPAGTVFEDTNTGLTFITTQETVVKAGTADIAVKCETTGVEGNLKAGTSLSLTSAILGLLPTATVKVMSGGADIESLSRLLARLIYRVQYPPAGGASHDYIRWATEVPGVTRAWCFERYYGGGTVGVAFACDEREDILPTPEDIARVRAYIEGHKNEVTGQFEGMPANVELYVFAPQFQAVNFKIRLAPNTPTLRQAVRKSLAAYLANAGVGALLYLSQIRATVSNTAGEVDNSVIFPTADVQLLSDNIAILGDIEWL.

It belongs to the Mu gp47/PBSX XkdT family.

In Haemophilus influenzae (strain ATCC 51907 / DSM 11121 / KW20 / Rd), this protein is Mu-like prophage FluMu protein gp47.